The chain runs to 261 residues: Leucine-rich repeat-containing protein 61 (261 aa).

3 LRR repeats span residues 54-75, 76-97, and 98-119; these read GLEW…ASLR, QLAV…AACE, and NLQC…QCLA. Positions 138 to 183 constitute an LRRCT domain; the sequence is NPLCASPCYWASVRELLPGLKVLDGERVSGRGSDFYQLCRDLDSSL.

The sequence is that of Leucine-rich repeat-containing protein 61 (LRRC61) from Bos taurus (Bovine).